Reading from the N-terminus, the 490-residue chain is Aspartyl aminopeptidase 4 (490 aa).

His97 provides a ligand contact to Zn(2+). A substrate-binding site is contributed by His173. Residues Asp273, Glu308, Glu309, and Asp362 each coordinate Zn(2+). Glu308 is a substrate binding site. The substrate site is built by Asp362, His365, Lys390, and Tyr397. His456 serves as a coordination point for Zn(2+).

The protein belongs to the peptidase M18 family. In terms of assembly, tetrahedron-shaped homododecamer built from six homodimers. It depends on Zn(2+) as a cofactor.

It localises to the cytoplasm. It is found in the vacuole lumen. It catalyses the reaction Release of an N-terminal aspartate or glutamate from a peptide, with a preference for aspartate.. The metalloproteases inhibitors EDTA and 1.10-phenanthroline both inhibit the activity, whereas bestatin, an inhibitor of most aminopeptidases, does not affect enzyme activity. In terms of biological role, aspartyl aminopeptidase that contributes to peptide degradation both in the cytosol and the vacuole. Cells may respond to environmental conditions by changing the distributions of the cytosolic enzyme to the vacuole when cells need more active vacuolar degradation. This is Aspartyl aminopeptidase 4 (APE4) from Saccharomyces cerevisiae (strain ATCC 204508 / S288c) (Baker's yeast).